We begin with the raw amino-acid sequence, 185 residues long: Lipopolysaccharide export system protein LptA (185 aa).

An N-terminal signal peptide occupies residues 1 to 27; the sequence is MKFKTNKLSLNLVLASSLLAASIPAFA. The disordered stretch occupies residues 166–185; that stretch reads PSQLQDKNNKGQTPAQKKGN.

The protein belongs to the LptA family. Component of the lipopolysaccharide transport and assembly complex.

It is found in the periplasm. Its function is as follows. Involved in the assembly of lipopolysaccharide (LPS). Required for the translocation of LPS from the inner membrane to the outer membrane. May form a bridge between the inner membrane and the outer membrane, via interactions with LptC and LptD, thereby facilitating LPS transfer across the periplasm. This chain is Lipopolysaccharide export system protein LptA, found in Escherichia coli O157:H7.